The following is a 1042-amino-acid chain: Ubiquitin carboxyl-terminal hydrolase 38 (1042 aa).

The 505-residue stretch at 445-949 folds into the USP domain; the sequence is TGLINLGNTC…TAYVLLYKKQ (505 aa). Catalysis depends on cysteine 454, which acts as the Nucleophile. Histidine 857 acts as the Proton acceptor in catalysis.

The protein belongs to the peptidase C19 family. As to quaternary structure, interacts with isoform 1 of FBXW7; this interaction prevents FBXW7-mediated degradation of MYC.

It is found in the cytoplasm. Its subcellular location is the nucleus. It catalyses the reaction Thiol-dependent hydrolysis of ester, thioester, amide, peptide and isopeptide bonds formed by the C-terminal Gly of ubiquitin (a 76-residue protein attached to proteins as an intracellular targeting signal).. In terms of biological role, deubiquitinating enzyme that plays a role in various cellular processes, including DNA repair, cell cycle regulation, and immune response. Plays a role in the inhibition of type I interferon signaling by mediating the 'Lys-33' to 'Lys-48' ubiquitination transition of TBK1 leading to its degradation. Cleaves the ubiquitin chain from the histone demethylase LSD1/KDM1A and prevents it from degradation by the 26S proteasome, thus maintaining LSD1 protein level in cells. Plays a role in the DNA damage response by regulating the deacetylase activity of HDAC1. Mechanistically, removes the 'Lys-63'-linked ubiquitin chain promoting the deacetylase activity of HDAC1 in response to DNA damage. Also acts as a specific deubiquitinase of histone deacetylase 3/HDAC3 and cleaves its 'Lys-63'-linked ubiquitin chains to lower its histone deacetylase activity. Regulates MYC levels and cell proliferation via antagonizing ubiquitin E3 ligase FBXW7 thereby preventing MYC 'Lys-48'-linked ubiquitination and degradation. Participates in antiviral response by removing both 'Lys-48'-linked and 'Lys-63'-linked polyubiquitination of Zika virus envelope protein E. Constitutively associated with IL-33R/IL1RL1, deconjugates its 'Lys-27'-linked polyubiquitination resulting in its autophagic degradation. The chain is Ubiquitin carboxyl-terminal hydrolase 38 (Usp38) from Mus musculus (Mouse).